We begin with the raw amino-acid sequence, 399 residues long: Phosphomevalonate dehydratase large subunit (399 aa).

Residues G54, V55, S56, N85, and P86 each contribute to the (R)-5-phosphomevalonate site. Position 125 (C125) interacts with [4Fe-4S] cluster. (R)-5-phosphomevalonate is bound by residues E144 and S145. [4Fe-4S] cluster is bound by residues C298 and C355. Residue K375 coordinates (R)-5-phosphomevalonate.

The protein belongs to the AcnX type II large subunit family. Heterodimer composed of a large subunit (PMDh-L) and a small subunit (PMDh-S). Requires [4Fe-4S] cluster as cofactor.

The catalysed reaction is (R)-5-phosphomevalonate = (2E)-3-methyl-5-phosphooxypent-2-enoate + H2O. It participates in isoprenoid biosynthesis; isopentenyl diphosphate biosynthesis via mevalonate pathway. In terms of biological role, component of a hydro-lyase that catalyzes the dehydration of mevalonate 5-phosphate (MVA5P) to form trans-anhydromevalonate 5-phosphate (tAHMP). Involved in the archaeal mevalonate (MVA) pathway, which provides fundamental precursors for isoprenoid biosynthesis, such as isopentenyl diphosphate (IPP) and dimethylallyl diphosphate (DMAPP). In Methanothermobacter thermautotrophicus (strain ATCC 29096 / DSM 1053 / JCM 10044 / NBRC 100330 / Delta H) (Methanobacterium thermoautotrophicum), this protein is Phosphomevalonate dehydratase large subunit.